The sequence spans 140 residues: Large ribosomal subunit protein uL11 (140 aa).

Belongs to the universal ribosomal protein uL11 family. In terms of assembly, part of the ribosomal stalk of the 50S ribosomal subunit. Interacts with L10 and the large rRNA to form the base of the stalk. L10 forms an elongated spine to which L12 dimers bind in a sequential fashion forming a multimeric L10(L12)X complex. In terms of processing, one or more lysine residues are methylated.

In terms of biological role, forms part of the ribosomal stalk which helps the ribosome interact with GTP-bound translation factors. This is Large ribosomal subunit protein uL11 from Symbiobacterium thermophilum (strain DSM 24528 / JCM 14929 / IAM 14863 / T).